A 206-amino-acid chain; its full sequence is MLVLPIIGLTGGIASGKSTVSRILQELGFAIIDADRIARDILTPGHPAYQKVIDTFGKNILTEDGQIDRAKLGKIVFGNREKLLVLNSITHPEVLKEIRKKIKELTSSGIDWIVLDIPLLFEAKMTSLVDEIWVVYVPEEEQLKRLMARNGFSRDEALARIRAQMPLEEKVKLADVVIDNSGSIESTREQILTILQKWKWKDWSKK.

The region spanning 6-206 (IIGLTGGIAS…KWKWKDWSKK (201 aa)) is the DPCK domain. An ATP-binding site is contributed by 14-19 (ASGKST).

It belongs to the CoaE family.

The protein localises to the cytoplasm. The enzyme catalyses 3'-dephospho-CoA + ATP = ADP + CoA + H(+). It functions in the pathway cofactor biosynthesis; coenzyme A biosynthesis; CoA from (R)-pantothenate: step 5/5. Functionally, catalyzes the phosphorylation of the 3'-hydroxyl group of dephosphocoenzyme A to form coenzyme A. The polypeptide is Dephospho-CoA kinase (Carboxydothermus hydrogenoformans (strain ATCC BAA-161 / DSM 6008 / Z-2901)).